Reading from the N-terminus, the 539-residue chain is Membrane protein insertase YidC (539 aa).

5 helical membrane-spanning segments follow: residues 6–26 (TLLVLLLALVSFLLFQQWQVA), 341–361 (SVIQSFVGNWGVAIICLTFIV), 416–436 (LGGCLPLILQMPIFIALYWAL), 454–474 (LSAQDPYFILPLLMGGSMFLI), and 495–515 (PVMFTFFFLWFPSGLVLYWLV).

This sequence belongs to the OXA1/ALB3/YidC family. Type 1 subfamily. As to quaternary structure, interacts with the Sec translocase complex via SecD. Specifically interacts with transmembrane segments of nascent integral membrane proteins during membrane integration.

It localises to the cell inner membrane. Functionally, required for the insertion and/or proper folding and/or complex formation of integral membrane proteins into the membrane. Involved in integration of membrane proteins that insert both dependently and independently of the Sec translocase complex, as well as at least some lipoproteins. Aids folding of multispanning membrane proteins. The protein is Membrane protein insertase YidC of Vibrio vulnificus (strain CMCP6).